Reading from the N-terminus, the 124-residue chain is Small ribosomal subunit protein uS12 (124 aa).

It belongs to the universal ribosomal protein uS12 family. In terms of assembly, part of the 30S ribosomal subunit. Contacts proteins S8 and S17. May interact with IF1 in the 30S initiation complex.

With S4 and S5 plays an important role in translational accuracy. In terms of biological role, interacts with and stabilizes bases of the 16S rRNA that are involved in tRNA selection in the A site and with the mRNA backbone. Located at the interface of the 30S and 50S subunits, it traverses the body of the 30S subunit contacting proteins on the other side and probably holding the rRNA structure together. The combined cluster of proteins S8, S12 and S17 appears to hold together the shoulder and platform of the 30S subunit. The sequence is that of Small ribosomal subunit protein uS12 from Photorhabdus laumondii subsp. laumondii (strain DSM 15139 / CIP 105565 / TT01) (Photorhabdus luminescens subsp. laumondii).